A 472-amino-acid polypeptide reads, in one-letter code: Riboflavin transporter RibJ (472 aa).

Residues 1–11 (MLPCFTRKPVD) are Cytoplasmic-facing. A helical membrane pass occupies residues 12–32 (HPLGFLVALSGLLMQLMSYGI). Residues 33–58 (DNSYSIFSDDMHKDPSLGYPSVTTIS) are Extracellular-facing. A helical transmembrane segment spans residues 59 to 79 (LGNSVSLGLSPAFGVLCGFLV). At 80-85 (DRVPPR) the chain is on the cytoplasmic side. The chain crosses the membrane as a helical span at residues 86–106 (LMMAVSTLMLFAGLWLSSTFA). The Extracellular segment spans residues 107-108 (HN). N-linked (GlcNAc...) asparagine glycosylation occurs at asparagine 108. Residues 109–129 (VTAVTFSYCLLASISSACMLS) traverse the membrane as a helical segment. Residues 130–144 (PGAAATSSWFNRYQG) lie on the Cytoplasmic side of the membrane. A helical membrane pass occupies residues 145 to 165 (LAMGINFSGGGVGSAIIPSLA). Residues 166 to 179 (GKWVVAYGWRKTFR) lie on the Extracellular side of the membrane. A helical transmembrane segment spans residues 180–196 (LMSAFCAIGVVATLLSA). Residues 197-271 (RRAPPKKEEA…TMFSRAFLGN (75 aa)) are Cytoplasmic-facing. Residues 200–248 (PPKKEEAGPSEYDEGQERQEQGEEEQAHTDEENRNNNNSNGETTPARRG) are disordered. The segment covering 214-233 (GQERQEQGEEEQAHTDEENR) has biased composition (basic and acidic residues). Residues 272–292 (FFCWLIFSWAFYSLIYVAVPY) form a helical membrane-spanning segment. The Extracellular segment spans residues 293–315 (VSSMGKAGTVYADISPIPTDIAS). Residues 316–336 (TLFTFYGVFQIVGSILVGWLA) form a helical membrane-spanning segment. Over 337–341 (TGTTN) the chain is Cytoplasmic. A helical membrane pass occupies residues 342-362 (EFAYVLCATIGGIFCAFLGFC). Topologically, residues 363–365 (RSY) are extracellular. A helical membrane pass occupies residues 366 to 386 (VAFALLLCVIGFCMAGMFAVM). At 387-399 (PALIAERLYGPNL) the chain is on the cytoplasmic side. The chain crosses the membrane as a helical span at residues 400–420 (GFYMGAVFLAGVVGGFSAPPI). Residues 421-434 (QAELQQRHYGNYTY) are Extracellular-facing. The N-linked (GlcNAc...) asparagine glycan is linked to asparagine 431. Residues 435 to 455 (VCVFMSACMTLAAAVCYITMW) traverse the membrane as a helical segment. Over 456 to 472 (RDKRVRIVSAAAEAKLA) the chain is Cytoplasmic.

The protein belongs to the major facilitator superfamily. RibJ family.

The protein localises to the cell membrane. Its function is as follows. Transporter involved in riboflavin (vitamin B2) uptake. Also transports FMN and FAD. This is Riboflavin transporter RibJ from Trypanosoma cruzi (strain CL Brener).